The chain runs to 380 residues: Queuine tRNA-ribosyltransferase (380 aa).

Asp-96 serves as the catalytic Proton acceptor. Residues 96 to 100 (DSGGF), Asp-150, Gln-193, and Gly-220 contribute to the substrate site. Residues 251–257 (GVGAPDS) are RNA binding. The Nucleophile role is filled by Asp-270. Residues 275–279 (TRIAR) form an RNA binding; important for wobble base 34 recognition region. Residues Cys-308, Cys-310, Cys-313, and His-339 each coordinate Zn(2+).

Belongs to the queuine tRNA-ribosyltransferase family. As to quaternary structure, homodimer. Within each dimer, one monomer is responsible for RNA recognition and catalysis, while the other monomer binds to the replacement base PreQ1. The cofactor is Zn(2+).

The catalysed reaction is 7-aminomethyl-7-carbaguanine + guanosine(34) in tRNA = 7-aminomethyl-7-carbaguanosine(34) in tRNA + guanine. The protein operates within tRNA modification; tRNA-queuosine biosynthesis. In terms of biological role, catalyzes the base-exchange of a guanine (G) residue with the queuine precursor 7-aminomethyl-7-deazaguanine (PreQ1) at position 34 (anticodon wobble position) in tRNAs with GU(N) anticodons (tRNA-Asp, -Asn, -His and -Tyr). Catalysis occurs through a double-displacement mechanism. The nucleophile active site attacks the C1' of nucleotide 34 to detach the guanine base from the RNA, forming a covalent enzyme-RNA intermediate. The proton acceptor active site deprotonates the incoming PreQ1, allowing a nucleophilic attack on the C1' of the ribose to form the product. After dissociation, two additional enzymatic reactions on the tRNA convert PreQ1 to queuine (Q), resulting in the hypermodified nucleoside queuosine (7-(((4,5-cis-dihydroxy-2-cyclopenten-1-yl)amino)methyl)-7-deazaguanosine). The chain is Queuine tRNA-ribosyltransferase from Streptococcus pyogenes serotype M6 (strain ATCC BAA-946 / MGAS10394).